Reading from the N-terminus, the 248-residue chain is Ubiquinone/menaquinone biosynthesis C-methyltransferase UbiE (248 aa).

S-adenosyl-L-methionine contacts are provided by Ser-68 and Asp-92.

The protein belongs to the class I-like SAM-binding methyltransferase superfamily. MenG/UbiE family.

The catalysed reaction is a 2-demethylmenaquinol + S-adenosyl-L-methionine = a menaquinol + S-adenosyl-L-homocysteine + H(+). The enzyme catalyses a 2-methoxy-6-(all-trans-polyprenyl)benzene-1,4-diol + S-adenosyl-L-methionine = a 5-methoxy-2-methyl-3-(all-trans-polyprenyl)benzene-1,4-diol + S-adenosyl-L-homocysteine + H(+). Its pathway is quinol/quinone metabolism; menaquinone biosynthesis; menaquinol from 1,4-dihydroxy-2-naphthoate: step 2/2. It participates in cofactor biosynthesis; ubiquinone biosynthesis. Methyltransferase required for the conversion of demethylmenaquinol (DMKH2) to menaquinol (MKH2) and the conversion of 2-polyprenyl-6-methoxy-1,4-benzoquinol (DDMQH2) to 2-polyprenyl-3-methyl-6-methoxy-1,4-benzoquinol (DMQH2). The protein is Ubiquinone/menaquinone biosynthesis C-methyltransferase UbiE of Rickettsia massiliae (strain Mtu5).